The chain runs to 568 residues: Matrix metalloproteinase-21 (568 aa).

A signal peptide spans 1 to 24 (MLAASVLRLTLPLCWLVAPQPTQP). The propeptide occupies 25-143 (ERLFHSRDRS…SLGLRPRARQ (119 aa)). The short motif at 110–117 (PRCGVPDT) is the Cysteine switch element. Residues Cys-112 and His-282 each coordinate Zn(2+). Glu-283 is an active-site residue. Positions 286 and 292 each coordinate Zn(2+). An intrachain disulfide couples Cys-328 to Cys-559. 4 Hemopexin repeats span residues 329–388 (KGSF…WRGI), 390–446 (TQSI…FPGI), 447–495 (PSPL…FPAI), and 502–558 (FRNL…WFDV). N-linked (GlcNAc...) asparagine glycosylation is present at Asn-371.

It belongs to the peptidase M10A family. Zn(2+) is required as a cofactor. The cofactor is Ca(2+). The precursor is cleaved by a furin endopeptidase.

The protein localises to the secreted. In terms of biological role, plays a specialized role in the generation of left-right asymmetry during embryogenesis. May act as a negative regulator of the NOTCH-signaling pathway. Cleaves alpha-1-antitrypsin. This Mus musculus (Mouse) protein is Matrix metalloproteinase-21 (Mmp21).